Consider the following 179-residue polypeptide: Phospholipase A2 (179 aa).

An N-terminal signal peptide occupies residues 1–21 (MHALRSSVLALWLCLHVSVRA). Residues 22–39 (WMTYRSANGLDEYEPEDR) constitute a propeptide that is removed on maturation. Positions 47, 49, and 51 each coordinate Ca(2+). 5 disulfide bridges follow: C48–C70, C69–C109, C76–C102, C100–C133, and C142–C150. H73 is an active-site residue. D74 contacts Ca(2+). The active site involves D103.

Belongs to the phospholipase A2 family. Group III subfamily. The cofactor is Ca(2+). In terms of tissue distribution, expressed by the venom gland.

It is found in the secreted. The enzyme catalyses a 1,2-diacyl-sn-glycero-3-phosphocholine + H2O = a 1-acyl-sn-glycero-3-phosphocholine + a fatty acid + H(+). Its function is as follows. May potentiate Xylotoxin(1)-Xa1a DRG activation and cell lysis, since the orthologous A.mellifera PA2 potentiates Xylotoxin(1)-Xa1a DRG activation and cell lysis. In vivo, intraplantar injection in mice may potentiate spontaneous pain behaviors and paw swelling caused by Xylotoxin(1)-Xa1a, since the orthologous A.mellifera PA2 shows this effect. PLA2 catalyzes the calcium-dependent hydrolysis of the 2-acyl groups in 3-sn-phosphoglycerides. The sequence is that of Phospholipase A2 from Xylocopa aruana (Great carpenter bee).